We begin with the raw amino-acid sequence, 72 residues long: Translation initiation factor IF-1 (72 aa).

An S1-like domain is found at 1-72 (MSKSDYIELE…TKGRIIFRHK (72 aa)).

This sequence belongs to the IF-1 family. Component of the 30S ribosomal translation pre-initiation complex which assembles on the 30S ribosome in the order IF-2 and IF-3, IF-1 and N-formylmethionyl-tRNA(fMet); mRNA recruitment can occur at any time during PIC assembly.

The protein localises to the cytoplasm. Functionally, one of the essential components for the initiation of protein synthesis. Stabilizes the binding of IF-2 and IF-3 on the 30S subunit to which N-formylmethionyl-tRNA(fMet) subsequently binds. Helps modulate mRNA selection, yielding the 30S pre-initiation complex (PIC). Upon addition of the 50S ribosomal subunit IF-1, IF-2 and IF-3 are released leaving the mature 70S translation initiation complex. The polypeptide is Translation initiation factor IF-1 (Ruthia magnifica subsp. Calyptogena magnifica).